The sequence spans 100 residues: Large ribosomal subunit protein uL23 (100 aa).

The protein belongs to the universal ribosomal protein uL23 family. In terms of assembly, part of the 50S ribosomal subunit. Contacts protein L29, and trigger factor when it is bound to the ribosome.

Functionally, one of the early assembly proteins it binds 23S rRNA. One of the proteins that surrounds the polypeptide exit tunnel on the outside of the ribosome. Forms the main docking site for trigger factor binding to the ribosome. The polypeptide is Large ribosomal subunit protein uL23 (Corynebacterium aurimucosum (strain ATCC 700975 / DSM 44827 / CIP 107346 / CN-1) (Corynebacterium nigricans)).